Consider the following 460-residue polypeptide: Inner membrane symporter YicJ (460 aa).

Over 1–11 (MKSEVLSVKEK) the chain is Periplasmic. 2 consecutive transmembrane segments (helical) span residues 12-32 (IGYGMGDAASHIIFDNVMLYM) and 33-53 (MFFYTDIFGIPAGFVGTMFLV). Residues 54–80 (ARALDAISDPCMGLLADRTRSRWGKFR) are Periplasmic-facing. Residues 81-101 (PWVLFGALPFGIVCVLAYSTP) traverse the membrane as a helical segment. The Cytoplasmic segment spans residues 102-116 (DLSMNGKMIYAAITY). The helical transmembrane segment at 117–137 (TLLTLLYTVVNIPYCALGGVI) threads the bilayer. At 138 to 152 (TNDPTQRISLQSWRF) the chain is on the periplasmic side. The chain crosses the membrane as a helical span at residues 153–173 (VLATAGGMLSTVLMMPLVNLI). Over 174–181 (GGDNKPLG) the chain is Cytoplasmic. The chain crosses the membrane as a helical span at residues 182 to 202 (FQGGIAVLSVVAFMMLAFCFF). Topologically, residues 203–248 (TTKERVEAPPTTTSMREDLRDIWQNDQWRIVGLLTIFNILAVCVRG) are periplasmic. A helical transmembrane segment spans residues 249–269 (GAMMYYVTWILGTPEVFVAFL). Residues 270-288 (TTYCVGNLIGSALAKPLTD) are Cytoplasmic-facing. Residues 289–309 (WKCKVTIFWWTNALLAVISLA) traverse the membrane as a helical segment. Residue M310 is a topological domain, periplasmic. The chain crosses the membrane as a helical span at residues 311 to 331 (FFVPMQASITMFVFIFVIGVL). Over 332 to 366 (HQLVTPIQWVMMSDTVDYGEWCNGKRLTGISFAGT) the chain is Cytoplasmic. The helical transmembrane segment at 367–387 (LFVLKLGLAFGGALIGWMLAY) threads the bilayer. Residues 388–403 (GGYDAAEKAQNSATIS) are Periplasmic-facing. A helical membrane pass occupies residues 404–424 (IIIALFTIVPAICYLLSAIIA). Residues 425-460 (KRYYSLTTHNLKTVMEQLAQGKRRCQQQFTSQEVQN) are Cytoplasmic-facing.

It belongs to the sodium:galactoside symporter (TC 2.A.2) family.

The protein localises to the cell inner membrane. This chain is Inner membrane symporter YicJ (yicJ), found in Escherichia coli (strain K12).